The chain runs to 206 residues: Large ribosomal subunit protein eL13 (206 aa).

A compositionally biased stretch (basic and acidic residues) spans 184-193 (EKTNQKWDGK). The segment at 184–206 (EKTNQKWDGKRKAKAQAAAEPKA) is disordered.

The protein belongs to the eukaryotic ribosomal protein eL13 family.

The polypeptide is Large ribosomal subunit protein eL13 (RPL13) (Tetrahymena thermophila (strain SB210)).